The following is a 151-amino-acid chain: Transcriptional repressor NrdR (151 aa).

A zinc finger spans residues 3–34; sequence CPFCSHPDTQVVETREAEDGGFIRRRRQCGGC. The ATP-cone domain occupies 49–139; the sequence is PAIVKKDGRR…VYRSFEDVDD (91 aa).

Belongs to the NrdR family. Zn(2+) serves as cofactor.

Its function is as follows. Negatively regulates transcription of bacterial ribonucleotide reductase nrd genes and operons by binding to NrdR-boxes. This chain is Transcriptional repressor NrdR, found in Delftia acidovorans (strain DSM 14801 / SPH-1).